The following is a 189-amino-acid chain: Protein GrpE (189 aa).

Residues 1–20 (MSDQQHSAPQNAAATASPSD) are compositionally biased toward polar residues. Residues 1-29 (MSDQQHSAPQNAAATASPSDSPEAVEATM) form a disordered region.

It belongs to the GrpE family. Homodimer.

It is found in the cytoplasm. Participates actively in the response to hyperosmotic and heat shock by preventing the aggregation of stress-denatured proteins, in association with DnaK and GrpE. It is the nucleotide exchange factor for DnaK and may function as a thermosensor. Unfolded proteins bind initially to DnaJ; upon interaction with the DnaJ-bound protein, DnaK hydrolyzes its bound ATP, resulting in the formation of a stable complex. GrpE releases ADP from DnaK; ATP binding to DnaK triggers the release of the substrate protein, thus completing the reaction cycle. Several rounds of ATP-dependent interactions between DnaJ, DnaK and GrpE are required for fully efficient folding. The protein is Protein GrpE of Paracidovorax citrulli (strain AAC00-1) (Acidovorax citrulli).